A 446-amino-acid polypeptide reads, in one-letter code: Probable D-serine dehydratase (446 aa).

Residue Lys116 is modified to N6-(pyridoxal phosphate)lysine.

The protein belongs to the serine/threonine dehydratase family. DsdA subfamily. Pyridoxal 5'-phosphate is required as a cofactor.

It catalyses the reaction D-serine = pyruvate + NH4(+). This chain is Probable D-serine dehydratase, found in Bacillus thuringiensis subsp. konkukian (strain 97-27).